The chain runs to 386 residues: Agamous-like MADS-box protein AGL103 (386 aa).

Positions 29–76 (SSSRATSLIKRQQTVFKKAKELSILCDIDVCVICYGSNGELKTWPEER) constitute an MADS-box domain.

In terms of assembly, interacts with MEE14/CBP1.

It localises to the nucleus. Probable transcription factor that may function in the maintenance of the proper function of the central cell in pollen tube attraction. This is Agamous-like MADS-box protein AGL103 from Arabidopsis thaliana (Mouse-ear cress).